We begin with the raw amino-acid sequence, 431 residues long: Protein prenyltransferase alpha subunit repeat-containing protein 1-B (431 aa).

5 PFTA repeats span residues 85–118 (ELID…TLNP), 120–153 (KDLQ…VQEL), 178–211 (EEMH…GNLN), 217–250 (DELS…LCKT), and 293–326 (EEMK…HQLL). The segment at 363 to 383 (PMDVDGMSDPNKQGYTQETKR) is disordered. The PFTA 6 repeat unit spans residues 394 to 431 (SLDSELRFINCVLTNCCSPEQSRFAASYRKWLLSLQGY).

It belongs to the protein prenyltransferase subunit alpha family.

In Xenopus laevis (African clawed frog), this protein is Protein prenyltransferase alpha subunit repeat-containing protein 1-B (ptar1-b).